The following is a 158-amino-acid chain: Phosphopantetheine adenylyltransferase (158 aa).

Thr10 is a substrate binding site. ATP is bound by residues 10 to 11 and His18; that span reads TF. 3 residues coordinate substrate: Lys42, Leu74, and Arg88. ATP is bound by residues 89-91, Glu99, and 124-130; these read GLR and YSFISSS.

It belongs to the bacterial CoaD family. As to quaternary structure, homohexamer. It depends on Mg(2+) as a cofactor.

Its subcellular location is the cytoplasm. The enzyme catalyses (R)-4'-phosphopantetheine + ATP + H(+) = 3'-dephospho-CoA + diphosphate. Its pathway is cofactor biosynthesis; coenzyme A biosynthesis; CoA from (R)-pantothenate: step 4/5. Reversibly transfers an adenylyl group from ATP to 4'-phosphopantetheine, yielding dephospho-CoA (dPCoA) and pyrophosphate. In Erwinia tasmaniensis (strain DSM 17950 / CFBP 7177 / CIP 109463 / NCPPB 4357 / Et1/99), this protein is Phosphopantetheine adenylyltransferase.